The following is a 293-amino-acid chain: ATP synthase gamma chain (293 aa).

Belongs to the ATPase gamma chain family. F-type ATPases have 2 components, CF(1) - the catalytic core - and CF(0) - the membrane proton channel. CF(1) has five subunits: alpha(3), beta(3), gamma(1), delta(1), epsilon(1). CF(0) has three main subunits: a, b and c.

The protein resides in the cell inner membrane. Produces ATP from ADP in the presence of a proton gradient across the membrane. The gamma chain is believed to be important in regulating ATPase activity and the flow of protons through the CF(0) complex. The chain is ATP synthase gamma chain from Nitrosospira multiformis (strain ATCC 25196 / NCIMB 11849 / C 71).